A 1020-amino-acid polypeptide reads, in one-letter code: 26S proteasome non-ATPase regulatory subunit 1 (1020 aa).

Residues 279–322 are disordered; it reads TALPSTFKPQGTTSEDGAKSEGDKSKSDEDITEETPADDKVERT. Positions 281 to 293 are enriched in polar residues; the sequence is LPSTFKPQGTTSE. T291 bears the Phosphothreonine mark. Over residues 294–307 the composition is skewed to basic and acidic residues; that stretch reads DGAKSEGDKSKSDE. A phosphoserine mark is found at S298, S303, and S305. A Phosphothreonine modification is found at T310. 10 PC repeats span residues 418 to 452, 456 to 489, 491 to 525, 526 to 560, 562 to 595, 596 to 631, 632 to 664, 666 to 701, 702 to 742, and 745 to 777; these read TATASLGVIHRGHEKDSLALMQSYLPKEAGPSSGY, GALYALGLIHANHGANIIDYLLQQLKDAQNENVR, GGCLGLGLAGMGTHRQDLYEQLKFNLYQDDAVTGE, AAGIAMGMVMLGSKNAQAIEDMVSYAQETQHEKIL, GLAVGISLTMFSRLEEADPLVTSLSSDKDPVLRR, SGMYTIAMAYNGTGSNKAIRKLLHVAVSDVNDDVRR, AAVTAIGFILFRSPEQCPSVVSLLAESYNPHVR, GAAMALGIACAGTGLREAIALLEPMVKFDPVNFVRQ, GALI…DVMA, and GAILAQGIIDAGGRNATLSLQSRTGHTNLQAVV. 2 disordered regions span residues 855–950 and 999–1020; these read QKRR…NPAR and FGPMNDEEKEPEPPEPFEYIED. Basic and acidic residues-rich tracts occupy residues 858 to 867 and 876 to 939; these read RENADKKEDE and KEGA…KEPE. The span at 1003–1020 shows a compositional bias: acidic residues; sequence NDEEKEPEPPEPFEYIED.

The protein belongs to the proteasome subunit S1 family.

Acts as a regulatory subunit of the 26S proteasome which is involved in the ATP-dependent degradation of ubiquitinated proteins. The polypeptide is 26S proteasome non-ATPase regulatory subunit 1 (Rpn2) (Drosophila melanogaster (Fruit fly)).